Consider the following 505-residue polypeptide: ATP synthase subunit alpha (505 aa).

Position 169–176 (169–176) interacts with ATP; the sequence is GDRQIGKT.

Belongs to the ATPase alpha/beta chains family. F-type ATPases have 2 components, CF(1) - the catalytic core - and CF(0) - the membrane proton channel. CF(1) has five subunits: alpha(3), beta(3), gamma(1), delta(1), epsilon(1). CF(0) has three main subunits: a(1), b(2) and c(9-12). The alpha and beta chains form an alternating ring which encloses part of the gamma chain. CF(1) is attached to CF(0) by a central stalk formed by the gamma and epsilon chains, while a peripheral stalk is formed by the delta and b chains.

Its subcellular location is the cell inner membrane. It carries out the reaction ATP + H2O + 4 H(+)(in) = ADP + phosphate + 5 H(+)(out). Its function is as follows. Produces ATP from ADP in the presence of a proton gradient across the membrane. The alpha chain is a regulatory subunit. The protein is ATP synthase subunit alpha of Desulfatibacillum aliphaticivorans.